Here is a 260-residue protein sequence, read N- to C-terminus: POLG alternative reading frame (260 aa).

Disordered stretches follow at residues 1–50 and 108–219; these read MEPK…LRPR and ARRG…RRGG. Composition is skewed to low complexity over residues 36–48, 116–154, and 164–186; these read AGSS…LQLR, GRGA…GQPG, and AEPA…EAPG. The required for nucleolar localization stretch occupies residues 104 to 130; that stretch reads ANLRARRGDAWRGRGAPQRRAPAEARA. Gly residues-rich tracts occupy residues 187–199 and 209–219; these read LGLG…VRPR and RGAGPGVRRGG.

As to quaternary structure, interacts with C1QBP; the interaction results in nucleolar localization of C1QBP, probably due to prevention of C1QBP maturation and redirection from mitochondria to nucleoli. Undergoes proteolytic cleavage to produce a secreted C-terminal fragment.

The protein localises to the nucleus. It is found in the nucleolus. Its subcellular location is the secreted. In Homo sapiens (Human), this protein is POLG alternative reading frame.